Consider the following 370-residue polypeptide: Neutral protease 2 homolog AFUB_070680 (370 aa).

The N-terminal stretch at 1-19 (MKVTILASAILALINGALA) is a signal peptide. Positions 20–172 (LPANTPTLDV…PQAIKLLDRR (153 aa)) are excised as a propeptide. Intrachain disulfides connect Cys-178–Cys-250 and Cys-257–Cys-275. His-300 is a Zn(2+) binding site. Glu-301 is an active-site residue. Zn(2+)-binding residues include His-304 and Asp-315.

Belongs to the peptidase M35 family. Requires Zn(2+) as cofactor.

It is found in the secreted. It catalyses the reaction Preferential cleavage of bonds with hydrophobic residues in P1'. Also 3-Asn-|-Gln-4 and 8-Gly-|-Ser-9 bonds in insulin B chain.. Functionally, secreted metalloproteinase that allows assimilation of proteinaceous substrates. Shows high activities on basic nuclear substrates such as histone and protamine. May be involved in virulence. This Aspergillus fumigatus (strain CBS 144.89 / FGSC A1163 / CEA10) (Neosartorya fumigata) protein is Neutral protease 2 homolog AFUB_070680.